A 537-amino-acid polypeptide reads, in one-letter code: MRPYYITTAIAYPNAAPHIGHAYEYIATDAIARFKRLDGLDVRFLTGTDEHGLKVAQAAEAAGVPTAQLARRNSGVFQRMQEALHISFDRFIRTTDADHYKAAKEIWRRMDAAGDIYLGTYSGWYSVRDERFFVDSETKLLDNGIRVAVETGTLVTWTEKEQTYFFRLSAYVDKLLAHYDANPDFIGPEVRRNEVISFVSGGLEDFSISRTSFDWGVQVPEHPDHVMYVWIDALTNYLTGAGFPDTDSELFGRYWPANLHMIGKDIIRFHAVYWPAFLMSAGIELPRRIFAHGFLHNHGEKMSKSVGNIVDPMALVQTFGVDQVRYFLLREIPFGQDGNYSEEAIITRMNTDLANEFGNLAQRSLSMVAKNLGGVVPEPSEFTSADTALLTTADGLLERVRGNFDGQAMNLALEAIWLMLGEANKYFSSQQPWILRKSESEADQARFRTVLYTTCEVVRIAALLVQPVMPESAGKMLDLLGQEEDQRAFTAVSVRLAPGTVLPPPTGVFPRYQPSEIEGADPVKSSSKRREHNKRRE.

Positions 11–21 (AYPNAAPHIGH) match the 'HIGH' region motif. The 'KMSKS' region signature appears at 301 to 305 (KMSKS). Lys304 provides a ligand contact to ATP. Residues 503–537 (PPPTGVFPRYQPSEIEGADPVKSSSKRREHNKRRE) are disordered. The span at 526–537 (SSKRREHNKRRE) shows a compositional bias: basic residues.

Belongs to the class-I aminoacyl-tRNA synthetase family. MetG type 2B subfamily. In terms of assembly, monomer.

It localises to the cytoplasm. The enzyme catalyses tRNA(Met) + L-methionine + ATP = L-methionyl-tRNA(Met) + AMP + diphosphate. Is required not only for elongation of protein synthesis but also for the initiation of all mRNA translation through initiator tRNA(fMet) aminoacylation. This chain is Methionine--tRNA ligase, found in Mycobacterium leprae (strain TN).